A 411-amino-acid chain; its full sequence is uncharacterized protein (411 aa).

Positions Met-1 to Cys-21 are cleaved as a signal peptide. Residues Pro-28–Gln-67 form the EGF-like domain. Intrachain disulfides connect Cys-32–Cys-42, Cys-36–Cys-54, and Cys-56–Cys-66. The segment covering Thr-78–Ala-97 has biased composition (polar residues). 2 disordered regions span residues Thr-78–Arg-312 and His-337–Met-375. Basic and acidic residues predominate over residues Asp-100–Thr-230. Positions Phe-237–Glu-266 are enriched in acidic residues. The span at Asp-267–Thr-276 shows a compositional bias: low complexity.

This is an uncharacterized protein from Caenorhabditis elegans.